The primary structure comprises 677 residues: High-affinity choline transport protein (677 aa).

12 helical membrane-spanning segments follow: residues 15-35 (PVVFYTSAGLILLFSLTTILF), 54-74 (FGWYYLLAATLYIVFVVCIAC), 94-114 (LSWAAMLFAAGIGIDLMFFSV), 144-164 (FHYGLTGWSMYALMGMALGYF), 196-216 (IAAVIGTIFGIATTLGIGVVQ), 233-253 (AKAALIALSVIIATISVTSGV), 265-285 (VALALGLILFVLFMGDTSFLL), 319-339 (WTLFFWAWWVAWSPFVGLFLA), 350-370 (FVLGTLIIPFTFTLLWLSVFG), 412-432 (VATITGLLFYVTSADSGALVL), 452-472 (VFWSVAIGLLTLGMLMTNGIS), and 477-497 (TTVIMGLPFSFVIFFVMAGLY).

This sequence belongs to the BCCT transporter (TC 2.A.15) family.

The protein resides in the cell inner membrane. The catalysed reaction is choline(in) + H(+)(in) = choline(out) + H(+)(out). It participates in amine and polyamine biosynthesis; betaine biosynthesis via choline pathway. Its function is as follows. High-affinity uptake of choline driven by a proton-motive force. The sequence is that of High-affinity choline transport protein (betT) from Escherichia coli O157:H7.